The chain runs to 56 residues: Large ribosomal subunit protein bL32 (56 aa).

Residues 1–37 (MAVQQNKKSRSRRDMRRSHDALTTAAVSVDKTTGETH) form a disordered region. The span at 7–16 (KKSRSRRDMR) shows a compositional bias: basic residues.

The protein belongs to the bacterial ribosomal protein bL32 family.

The protein is Large ribosomal subunit protein bL32 of Haemophilus ducreyi (strain 35000HP / ATCC 700724).